A 704-amino-acid chain; its full sequence is Sulfate anion transporter 1 (704 aa).

Threonine 13 carries the phosphothreonine modification. Helical transmembrane passes span 68-90 (YLAG…AIAY) and 94-116 (AGLQ…FLMG). N-linked (GlcNAc...) asparagine glycans are attached at residues asparagine 158 and asparagine 163. Helical transmembrane passes span 185–207 (VATA…RLGF), 260–282 (NVGQ…LLAA), 295–314 (VPIP…SHFG), 347–369 (ALDA…EMFA), 382–404 (LLAV…SAAL), 417–439 (TQLS…APLF), and 477–499 (LVWV…LAGV). Positions 532–690 (EFEGLLPPPE…PSVHSAVEAA (159 aa)) constitute an STAS domain. Phosphoserine is present on serine 587. Residue asparagine 588 is glycosylated (N-linked (GlcNAc...) asparagine). Serine 590 is subject to Phosphoserine.

It belongs to the SLC26A/SulP transporter (TC 2.A.53) family. Expressed in the heart, cecum, calvaria, brain, liver, skeletal muscle and kidney.

The protein resides in the cell membrane. Its subcellular location is the basolateral cell membrane. It carries out the reaction thiosulfate(in) + sulfate(out) = thiosulfate(out) + sulfate(in). It catalyses the reaction 2 hydrogencarbonate(out) + sulfate(in) = 2 hydrogencarbonate(in) + sulfate(out). The catalysed reaction is oxalate(in) + sulfate(out) = oxalate(out) + sulfate(in). The enzyme catalyses oxalate(in) + 2 hydrogencarbonate(out) = oxalate(out) + 2 hydrogencarbonate(in). Sodium-independent sulfate anion transporter. Can transport other anions including bicarbonate, thiosulfate and oxalate by mediating sulfate-hydrogencarbonate, sulfate-oxalate and oxalate-hydrogencarbonate anion exchange. Mediates sulfate-thiosulfate anion exchange. The polypeptide is Sulfate anion transporter 1 (Slc26a1) (Mus musculus (Mouse)).